Reading from the N-terminus, the 518-residue chain is UPF0053 inner membrane protein YoaE (518 aa).

The Cytoplasmic portion of the chain corresponds to 1–13 (MEFLMDPSIWAGL). Residues 14–34 (LTLVVLEIVLGIDNLVFIAIL) traverse the membrane as a helical segment. Over 35–48 (ADKLPPKQRDKARL) the chain is Periplasmic. A helical membrane pass occupies residues 49 to 69 (LGLSLALIMRLGLLSLISWMV). Residues 70–78 (TLTKPLFTV) are Cytoplasmic-facing. A helical membrane pass occupies residues 79-99 (MDFSFSGRDLIMLFGGIFLLF). Over 100 to 124 (KATTELHERLENRDHDSGHGKGYAS) the chain is Periplasmic. The helical transmembrane segment at 125-145 (FWVVVTQIVILDAVFSLDAVI) threads the bilayer. The Cytoplasmic segment spans residues 146–149 (TAVG). The chain crosses the membrane as a helical span at residues 150–170 (MVNHLPVMMAAVVIAMAVMLL). Residues 171–184 (ASKPLTRFVNQHPT) are Periplasmic-facing. A helical membrane pass occupies residues 185–205 (VVVLCLSFLLMIGLSLVAEGF). Residue Gly-206 is a topological domain, cytoplasmic. The helical transmembrane segment at 207–227 (FHIPKGYLYAAIGFSIIIEVF) threads the bilayer. Residues 228–354 (NQIARRNFIR…IGIVRAKELL (127 aa)) lie on the Periplasmic side of the membrane. 2 consecutive CBS domains span residues 304–363 (MTPR…GVDV) and 367–427 (ASAS…DADE). Residues 355–375 (VALEEGVDVAAIASASPAIIV) traverse the membrane as a helical segment. Residues 376-518 (PETLDPINLL…KEQPAHDEDE (143 aa)) lie on the Cytoplasmic side of the membrane.

It belongs to the UPF0053 family.

The protein localises to the cell inner membrane. This Escherichia coli O157:H7 protein is UPF0053 inner membrane protein YoaE (yoaE).